The chain runs to 126 residues: Phosphoribosyl-AMP cyclohydrolase (126 aa).

A Mg(2+)-binding site is contributed by aspartate 76. Cysteine 77 lines the Zn(2+) pocket. Residues aspartate 78 and aspartate 80 each contribute to the Mg(2+) site. Residues cysteine 94 and cysteine 101 each contribute to the Zn(2+) site.

Belongs to the PRA-CH family. As to quaternary structure, homodimer. Mg(2+) serves as cofactor. It depends on Zn(2+) as a cofactor.

Its subcellular location is the cytoplasm. It carries out the reaction 1-(5-phospho-beta-D-ribosyl)-5'-AMP + H2O = 1-(5-phospho-beta-D-ribosyl)-5-[(5-phospho-beta-D-ribosylamino)methylideneamino]imidazole-4-carboxamide. The protein operates within amino-acid biosynthesis; L-histidine biosynthesis; L-histidine from 5-phospho-alpha-D-ribose 1-diphosphate: step 3/9. Catalyzes the hydrolysis of the adenine ring of phosphoribosyl-AMP. In Ruthia magnifica subsp. Calyptogena magnifica, this protein is Phosphoribosyl-AMP cyclohydrolase.